The sequence spans 82 residues: Protein costars (82 aa).

Belongs to the costars family.

In terms of biological role, modulates actin dynamics and cell motility. This is Protein costars (cosA) from Dictyostelium discoideum (Social amoeba).